A 459-amino-acid chain; its full sequence is Anthocyanidin 3-O-glucoside 2''-O-glucosyltransferase (459 aa).

Catalysis depends on His-20, which acts as the Proton acceptor. His-20 provides a ligand contact to an anthocyanidin. Asp-117 serves as the catalytic Charge relay. Thr-138, Val-335, Gln-337, His-352, Trp-355, Ser-357, and Glu-360 together coordinate UDP-alpha-D-glucose. Gly-375 serves as a coordination point for an anthocyanidin. 2 residues coordinate UDP-alpha-D-glucose: Asp-376 and Gln-377.

This sequence belongs to the UDP-glycosyltransferase family. Mainly expressed in the petals and tubes of flower buds at around 24 hours before flower opening.

It carries out the reaction an anthocyanidin 3-O-beta-D-glucoside + UDP-alpha-D-glucose = an anthocyanidin 3-O-sophoroside + UDP + 2 H(+). The protein operates within pigment biosynthesis; anthocyanin biosynthesis. In terms of biological role, glycosyltransferase that mediates the glucosylation of anthocyanidin 3-O-glucosides to yield anthocyanidin 3-O-sophorosides. 3-O-sophoroside derivatives are required for the bright blue or red color of flowers. This chain is Anthocyanidin 3-O-glucoside 2''-O-glucosyltransferase (3GGT), found in Ipomoea nil (Japanese morning glory).